The primary structure comprises 268 residues: Ribosomal RNA small subunit methyltransferase A (268 aa).

The S-adenosyl-L-methionine site is built by asparagine 23, leucine 25, glycine 50, glutamate 72, aspartate 94, and asparagine 116.

It belongs to the class I-like SAM-binding methyltransferase superfamily. rRNA adenine N(6)-methyltransferase family. RsmA subfamily.

Its subcellular location is the cytoplasm. It carries out the reaction adenosine(1518)/adenosine(1519) in 16S rRNA + 4 S-adenosyl-L-methionine = N(6)-dimethyladenosine(1518)/N(6)-dimethyladenosine(1519) in 16S rRNA + 4 S-adenosyl-L-homocysteine + 4 H(+). Specifically dimethylates two adjacent adenosines (A1518 and A1519) in the loop of a conserved hairpin near the 3'-end of 16S rRNA in the 30S particle. May play a critical role in biogenesis of 30S subunits. This chain is Ribosomal RNA small subunit methyltransferase A, found in Mycoplasmoides gallisepticum (strain R(low / passage 15 / clone 2)) (Mycoplasma gallisepticum).